A 1733-amino-acid polypeptide reads, in one-letter code: Polyketide synthase Pks13 (1733 aa).

The 79-residue stretch at 17–95 folds into the Carrier 1 domain; it reads ELTVPEMRQW…SLATRIIEGE (79 aa). S55 carries the post-translational modification O-(pantetheine 4'-phosphoryl)serine. Residues 116-541 form the Ketosynthase family 3 (KS3) domain; sequence RVDIAIVGLS…GANAHVVVRE (426 aa). C287 serves as the catalytic Acyl-thioester intermediate; for beta-ketoacyl synthase activity. Catalysis depends on for beta-ketoacyl synthase activity residues H423 and H463. Basic and acidic residues predominate over residues 548–560; the sequence is VEKEPEPEPEPKA. Residues 548–567 are disordered; the sequence is VEKEPEPEPEPKAAAEPAEA. The acyltransferase stretch occupies residues 713–1034; that stretch reads VWVLAGFGAQ…MVSTMAQLYV (322 aa). S801 (acyl-ester intermediate; for acyltransferase activity) is an active-site residue. One can recognise a Carrier 2 domain in the interval 1232–1309; it reads ETIAERLGLI…KLIEYAVEHR (78 aa). At S1266 the chain carries O-(pantetheine 4'-phosphoryl)serine. Residues 1344 to 1368 are disordered; the sequence is PVDSEAGVALPSPQNGEQPNPTGPA. The thioesterase-like stretch occupies residues 1470–1563; the sequence is PVFVFHPAGG…RFVGLIDAVR (94 aa). Residue S1533 is the For thioesterase-like activity of the active site.

Post-translationally, 4'-phosphopantetheine is transferred from CoA to specific serines of apo-Pks13 by PptT.

The protein operates within lipid metabolism; mycolic acid biosynthesis. Its activity is regulated as follows. The presence of FadD32 is necessary for the transfer of the acyl chain from the AMP carrier onto Pks13. Involved in the biosynthesis of mycolic acids. Forms, with FadD32, the initiation module of the mycolic condensation system. Synthesizes, in coupled reaction with FadD32, the biosynthetic precursors of mycolic acids, alpha-alkyl beta-ketoacids, via the condensation of two long chain fatty acid derivatives, a very long meromycoloyl-AMP and a shorter 2-carboxyacyl-CoA. The acyl chain of the acyl-AMP produced by FadD32 is specifically transferred onto the N-terminal ACP domain of Pks13, and then transferred onto the KS domain. The extender unit carboxyacyl-CoA is specifically loaded onto the AT domain, which catalyzes the covalent attachment of the carboxyacyl chain to its active site, and its subsequent transfer onto the P-pant arm of the C-terminal ACP domain. The KS domain catalyzes the condensation between the two loaded fatty acyl chains to produce an alpha-alkyl beta-ketothioester linked to the C-ACP domain. Then, the thioesterase-like domain acts as a transacylase and is responsible for both the release and the transfer of the alpha-alkyl beta-ketoacyl chain onto a polyol acceptor molecule, particularly trehalose, leading to the formation of the trehalose monomycolate precursor. This is Polyketide synthase Pks13 from Mycobacterium tuberculosis (strain ATCC 25618 / H37Rv).